A 406-amino-acid polypeptide reads, in one-letter code: Olfactomedin-like protein 3 (406 aa).

The N-terminal stretch at Met1–Gly21 is a signal peptide. Residues His25–Asn101 adopt a coiled-coil conformation. Residues Asp134–Lys401 form the Olfactomedin-like domain. Residues Cys135 and Cys328 are joined by a disulfide bond. N-linked (GlcNAc...) asparagine glycosylation is found at Asn177 and Asn248.

This sequence belongs to the OLFML3 family.

The protein resides in the secreted. In terms of biological role, secreted scaffold protein that plays an essential role in dorsoventral patterning during early development. Stabilizes axial formation by restricting chordin (CHRD) activity on the dorsal side. Acts by facilitating the association between the tolloid proteases and their substrate chordin (CHRD), leading to enhance chordin (CHRD) degradation. May have matrix-related function involved in placental and embryonic development, or play a similar role in other physiological processes. The polypeptide is Olfactomedin-like protein 3 (Olfml3) (Mus musculus (Mouse)).